A 454-amino-acid polypeptide reads, in one-letter code: Tyrosine aminotransferase (454 aa).

Met-1 is modified (N-acetylmethionine). Lys-280 is modified (N6-(pyridoxal phosphate)lysine). At Ser-448 the chain carries Phosphoserine.

The protein belongs to the class-I pyridoxal-phosphate-dependent aminotransferase family. As to quaternary structure, homodimer. Requires pyridoxal 5'-phosphate as cofactor.

The catalysed reaction is L-tyrosine + 2-oxoglutarate = 3-(4-hydroxyphenyl)pyruvate + L-glutamate. The protein operates within amino-acid degradation; L-phenylalanine degradation; acetoacetate and fumarate from L-phenylalanine: step 2/6. Functionally, transaminase involved in tyrosine breakdown. Converts tyrosine to p-hydroxyphenylpyruvate. Can catalyze the reverse reaction, using glutamic acid, with 2-oxoglutarate as cosubstrate (in vitro). Has much lower affinity and transaminase activity for phenylalanine. This is Tyrosine aminotransferase (Tat) from Mus musculus (Mouse).